The following is a 330-amino-acid chain: ADP-L-glycero-D-manno-heptose-6-epimerase (330 aa).

NADP(+)-binding positions include 11–12 (FI), 32–33 (DN), Lys-39, Lys-54, 75–79 (EGACS), and Asn-92. Catalysis depends on Tyr-139, which acts as the Proton acceptor. Lys-143 contributes to the NADP(+) binding site. Asn-168 contacts substrate. NADP(+) contacts are provided by Val-169 and Lys-177. Catalysis depends on Lys-177, which acts as the Proton acceptor. Residues Arg-179, His-186, 200–203 (FGEY), Arg-213, and Tyr-292 each bind substrate.

It belongs to the NAD(P)-dependent epimerase/dehydratase family. HldD subfamily. In terms of assembly, homopentamer. The cofactor is NADP(+).

It carries out the reaction ADP-D-glycero-beta-D-manno-heptose = ADP-L-glycero-beta-D-manno-heptose. It functions in the pathway nucleotide-sugar biosynthesis; ADP-L-glycero-beta-D-manno-heptose biosynthesis; ADP-L-glycero-beta-D-manno-heptose from D-glycero-beta-D-manno-heptose 7-phosphate: step 4/4. Catalyzes the interconversion between ADP-D-glycero-beta-D-manno-heptose and ADP-L-glycero-beta-D-manno-heptose via an epimerization at carbon 6 of the heptose. This Burkholderia ambifaria (strain ATCC BAA-244 / DSM 16087 / CCUG 44356 / LMG 19182 / AMMD) (Burkholderia cepacia (strain AMMD)) protein is ADP-L-glycero-D-manno-heptose-6-epimerase.